The following is a 313-amino-acid chain: 4-hydroxy-3-methylbut-2-enyl diphosphate reductase (313 aa).

Cys-13 contributes to the [4Fe-4S] cluster binding site. Positions 41 and 75 each coordinate (2E)-4-hydroxy-3-methylbut-2-enyl diphosphate. Dimethylallyl diphosphate contacts are provided by His-41 and His-75. Residues His-41 and His-75 each contribute to the isopentenyl diphosphate site. Cys-97 contacts [4Fe-4S] cluster. His-125 lines the (2E)-4-hydroxy-3-methylbut-2-enyl diphosphate pocket. Dimethylallyl diphosphate is bound at residue His-125. Position 125 (His-125) interacts with isopentenyl diphosphate. Catalysis depends on Glu-127, which acts as the Proton donor. Position 168 (Thr-168) interacts with (2E)-4-hydroxy-3-methylbut-2-enyl diphosphate. Cys-218 lines the [4Fe-4S] cluster pocket. 4 residues coordinate (2E)-4-hydroxy-3-methylbut-2-enyl diphosphate: Ser-246, Ser-247, Asn-248, and Ser-295. Residues Ser-246, Ser-247, Asn-248, and Ser-295 each coordinate dimethylallyl diphosphate. Ser-246, Ser-247, Asn-248, and Ser-295 together coordinate isopentenyl diphosphate.

This sequence belongs to the IspH family. [4Fe-4S] cluster serves as cofactor.

The enzyme catalyses isopentenyl diphosphate + 2 oxidized [2Fe-2S]-[ferredoxin] + H2O = (2E)-4-hydroxy-3-methylbut-2-enyl diphosphate + 2 reduced [2Fe-2S]-[ferredoxin] + 2 H(+). It carries out the reaction dimethylallyl diphosphate + 2 oxidized [2Fe-2S]-[ferredoxin] + H2O = (2E)-4-hydroxy-3-methylbut-2-enyl diphosphate + 2 reduced [2Fe-2S]-[ferredoxin] + 2 H(+). It functions in the pathway isoprenoid biosynthesis; dimethylallyl diphosphate biosynthesis; dimethylallyl diphosphate from (2E)-4-hydroxy-3-methylbutenyl diphosphate: step 1/1. The protein operates within isoprenoid biosynthesis; isopentenyl diphosphate biosynthesis via DXP pathway; isopentenyl diphosphate from 1-deoxy-D-xylulose 5-phosphate: step 6/6. Functionally, catalyzes the conversion of 1-hydroxy-2-methyl-2-(E)-butenyl 4-diphosphate (HMBPP) into a mixture of isopentenyl diphosphate (IPP) and dimethylallyl diphosphate (DMAPP). Acts in the terminal step of the DOXP/MEP pathway for isoprenoid precursor biosynthesis. In Chlorobium phaeovibrioides (strain DSM 265 / 1930) (Prosthecochloris vibrioformis (strain DSM 265)), this protein is 4-hydroxy-3-methylbut-2-enyl diphosphate reductase.